We begin with the raw amino-acid sequence, 268 residues long: Hydroxyethylthiazole kinase (268 aa).

Residue methionine 46 participates in substrate binding. Positions 122 and 168 each coordinate ATP. Glycine 195 lines the substrate pocket.

It belongs to the Thz kinase family. The cofactor is Mg(2+).

It catalyses the reaction 5-(2-hydroxyethyl)-4-methylthiazole + ATP = 4-methyl-5-(2-phosphooxyethyl)-thiazole + ADP + H(+). The protein operates within cofactor biosynthesis; thiamine diphosphate biosynthesis; 4-methyl-5-(2-phosphoethyl)-thiazole from 5-(2-hydroxyethyl)-4-methylthiazole: step 1/1. Catalyzes the phosphorylation of the hydroxyl group of 4-methyl-5-beta-hydroxyethylthiazole (THZ). In Desulfatibacillum aliphaticivorans, this protein is Hydroxyethylthiazole kinase.